A 758-amino-acid chain; its full sequence is Deoxynucleotidyltransferase terminal-interacting protein 2 (758 aa).

Over residues 1–21 (MVVTRSGLSRTRLQESSQQKR) the composition is skewed to polar residues. The disordered stretch occupies residues 1 to 176 (MVVTRSGLSR…SQSGTVSDAE (176 aa)). A phosphoserine mark is found at S17, S133, S137, and S140. Low complexity predominate over residues 128–143 (DEVVVSEAESHVSGVS). Residues 155-172 (NKANSQRDSSQESQSGTV) are compositionally biased toward polar residues. 2 positions are modified to phosphoserine: S173 and S183. Residue K210 forms a Glycyl lysine isopeptide (Lys-Gly) (interchain with G-Cter in SUMO2) linkage. S229, S240, S248, and S255 each carry phosphoserine. A compositionally biased stretch (polar residues) spans 231–255 (ATQLSARPLSQRNMPNVSDSETYNS). Disordered regions lie at residues 231-277 (ATQL…HQNL), 312-353 (KVIN…QLSS), 377-480 (DKRG…AEDL), and 501-552 (DKNF…DLLS). K317 is covalently cross-linked (Glycyl lysine isopeptide (Lys-Gly) (interchain with G-Cter in SUMO2)). Residues 321–353 (RSLSEAQDTSLQQSVSQNHSSTPNKKPTFQLSS) show a composition bias toward polar residues. A phosphoserine mark is found at S324 and S330. Residues K345 and K384 each participate in a glycyl lysine isopeptide (Lys-Gly) (interchain with G-Cter in SUMO2) cross-link. Residues 377-387 (DKRGGSGKKSD) show a composition bias toward basic and acidic residues. A compositionally biased stretch (polar residues) spans 431 to 440 (LSMTQDTTDS). Over residues 447–456 (SSDESQQSDS) the composition is skewed to low complexity. 2 positions are modified to phosphoserine: S476 and S512. Residues 512-541 (SEVAIEEEKEEEEKEEENSEEDSSDSDENK) are a coiled coil. Residues 515–550 (AIEEEKEEEEKEEENSEEDSSDSDENKDESSDEEDL) show a composition bias toward acidic residues. The segment at 550–607 (LLSNTKSKLLKLTSSSIDPGLNIKQLGGLYINFNVDKLQPHKETLTQIKEKKKNELLQ) is tdBR region; mediates interaction with DNTT. Residues K560, K586, and K608 each participate in a glycyl lysine isopeptide (Lys-Gly) (interchain with G-Cter in SUMO2) cross-link. T612 is modified (phosphothreonine). A disordered region spans residues 621-647 (VPPYSESKHRLQKQRRKERQKTAGNGW). A Glycyl lysine isopeptide (Lys-Gly) (interchain with G-Cter in SUMO2) cross-link involves residue K628. Basic residues predominate over residues 630-639 (RLQKQRRKER). Residues K651, K660, K688, and K733 each participate in a glycyl lysine isopeptide (Lys-Gly) (interchain with G-Cter in SUMO2) cross-link.

In terms of assembly, forms a ternary complex with DNTT and core histone; interaction with PCNA releases DNTT and H2A/H2B histones from this ternary complex. Interacts with ESR1, ESR2, PPARG and RXRA. Part of the small subunit (SSU) processome, composed of more than 70 proteins and the RNA chaperone small nucleolar RNA (snoRNA) U3.

It localises to the nucleus. The protein localises to the nucleolus. In terms of biological role, regulates the transcriptional activity of DNTT and ESR1. May function as a chromatin remodeling protein. Part of the small subunit (SSU) processome, first precursor of the small eukaryotic ribosomal subunit. During the assembly of the SSU processome in the nucleolus, many ribosome biogenesis factors, an RNA chaperone and ribosomal proteins associate with the nascent pre-rRNA and work in concert to generate RNA folding, modifications, rearrangements and cleavage as well as targeted degradation of pre-ribosomal RNA by the RNA exosome. This is Deoxynucleotidyltransferase terminal-interacting protein 2 (Dnttip2) from Mus musculus (Mouse).